The sequence spans 241 residues: Carboxy-S-adenosyl-L-methionine synthase (241 aa).

S-adenosyl-L-methionine is bound by residues Tyr-38, 63 to 65 (GCS), 88 to 89 (DN), 116 to 117 (DI), Asn-131, and Arg-198.

Belongs to the class I-like SAM-binding methyltransferase superfamily. Cx-SAM synthase family. As to quaternary structure, homodimer.

The catalysed reaction is prephenate + S-adenosyl-L-methionine = carboxy-S-adenosyl-L-methionine + 3-phenylpyruvate + H2O. In terms of biological role, catalyzes the conversion of S-adenosyl-L-methionine (SAM) to carboxy-S-adenosyl-L-methionine (Cx-SAM). The polypeptide is Carboxy-S-adenosyl-L-methionine synthase (Actinobacillus succinogenes (strain ATCC 55618 / DSM 22257 / CCUG 43843 / 130Z)).